The primary structure comprises 517 residues: 3-hydroxyphenylacetate 6-hydroxylase (517 aa).

C449 serves as a coordination point for heme.

It belongs to the cytochrome P450 family.

The enzyme catalyses 3-hydroxyphenylacetate + NADH + O2 + H(+) = homogentisate + NAD(+) + H2O. It catalyses the reaction 3-hydroxyphenylacetate + NADPH + O2 + H(+) = homogentisate + NADP(+) + H2O. The catalysed reaction is 3,4-dihydroxyphenylacetate + NADH + O2 + H(+) = 2,4,5-trihydroxyphenylacetate + NAD(+) + H2O. It carries out the reaction 3,4-dihydroxyphenylacetate + NADPH + O2 + H(+) = 2,4,5-trihydroxyphenylacetate + NADP(+) + H2O. It participates in aromatic compound metabolism; phenylacetate degradation. Functionally, catalyzes the hydroxylation of 3-hydroxyphenylacetate and 3,4-dihydroxyphenylacetate to 2,5-dihydroxyphenylacetate (homogentisate) and 2,4,5-trihydroxyphenylacetate, respectively. Both of these compounds are used as substrate by homogentisate dioxygenase in the homogentisate pathway. The homogentisate pathway is used to catabolize phenylacetate and use it as a carbon source. Can also catalyze the hydroxylation of phenylacetate to 2-hydroxyphenylacetate at low efficiency to compensate for loss of phacA. This Emericella nidulans (Aspergillus nidulans) protein is 3-hydroxyphenylacetate 6-hydroxylase (phacB).